A 157-amino-acid chain; its full sequence is uncharacterized protein (157 aa).

The signal sequence occupies residues Met1–Ala26.

Its subcellular location is the secreted. This is an uncharacterized protein from Homo sapiens (Human).